We begin with the raw amino-acid sequence, 468 residues long: Aldehyde dehydrogenase family 3 member B1 (468 aa).

Position 1 is an N-acetylmethionine (methionine 1). 188–193 contacts NAD(+); the sequence is GNPQVG. Catalysis depends on residues glutamate 210 and cysteine 244. A lipid anchor (S-palmitoyl cysteine) is attached at cysteine 463. Cysteine 465 bears the Cysteine methyl ester mark. Cysteine 465 carries the S-geranylgeranyl cysteine lipid modification. A propeptide spans 466-468 (removed in mature form); it reads TLL.

Belongs to the aldehyde dehydrogenase family. In terms of processing, dually lipidated in the C-terminus; prenylation occurs prior to, and is a prerequisite for palmitoylation. It is also required for activity towards long-chain substrates.

It is found in the cell membrane. The enzyme catalyses an aldehyde + NAD(+) + H2O = a carboxylate + NADH + 2 H(+). It catalyses the reaction a long-chain fatty aldehyde + NAD(+) + H2O = a long-chain fatty acid + NADH + 2 H(+). It carries out the reaction a medium-chain fatty aldehyde + NAD(+) + H2O = a medium-chain fatty acid + NADH + 2 H(+). The catalysed reaction is octanal + NAD(+) + H2O = octanoate + NADH + 2 H(+). The enzyme catalyses nonanal + NAD(+) + H2O = nonanoate + NADH + 2 H(+). It catalyses the reaction hexadecanoate + NADH + 2 H(+) = hexadecanal + NAD(+) + H2O. It carries out the reaction (2E)-octenal + NAD(+) + H2O = (2E)-octenoate + NADH + 2 H(+). The catalysed reaction is (E)-non-2-enal + NAD(+) + H2O = (E)-non-2-enoate + NADH + 2 H(+). The enzyme catalyses (E)-4-hydroxynon-2-enal + NAD(+) + H2O = (E)-4-hydroxynon-2-enoate + NADH + 2 H(+). It catalyses the reaction (2E)-hexadecenal + NAD(+) + H2O = (E)-hexadec-2-enoate + NADH + 2 H(+). It carries out the reaction benzaldehyde + NAD(+) + H2O = benzoate + NADH + 2 H(+). The catalysed reaction is an aldehyde + NADP(+) + H2O = a carboxylate + NADPH + 2 H(+). The enzyme catalyses a medium-chain fatty aldehyde + NADP(+) + H2O = a medium-chain fatty acid + NADPH + 2 H(+). It catalyses the reaction hexanal + NADP(+) + H2O = hexanoate + NADPH + 2 H(+). It carries out the reaction octanal + NADP(+) + H2O = octanoate + NADPH + 2 H(+). The catalysed reaction is nonanal + NADP(+) + H2O = nonanoate + NADPH + 2 H(+). The enzyme catalyses (2E)-octenal + NADP(+) + H2O = (2E)-octenoate + NADPH + 2 H(+). It catalyses the reaction (E)-non-2-enal + NADP(+) + H2O = (E)-non-2-enoate + NADPH + 2 H(+). It carries out the reaction (E)-4-hydroxynon-2-enal + NADP(+) + H2O = (E)-4-hydroxynon-2-enoate + NADPH + 2 H(+). The catalysed reaction is benzaldehyde + NADP(+) + H2O = benzoate + NADPH + 2 H(+). Its pathway is alcohol metabolism; ethanol degradation; acetate from ethanol: step 2/2. Oxidizes medium and long chain saturated and unsaturated fatty aldehydes generated in the plasma membrane into non-toxic fatty acids. May have a protective role against the cytotoxicity induced by lipid peroxidation. Short-chain fatty aldehydes are not good substrates. Can use both NADP(+) and NAD(+) as electron acceptor in vitro, however in vivo preference will depend on their tissue levels. Low activity towards acetaldehyde and 3,4-dihydroxyphenylacetaldehyde. Able to metabolize aromatic aldehydes such as benzaldehyde to their acid form. This chain is Aldehyde dehydrogenase family 3 member B1 (ALDH3B1), found in Bos taurus (Bovine).